The primary structure comprises 193 residues: MFNLLKQVSDYAKESIEAAKYIGQGLSVTFDHMRRRPVTVQYPYEKLIPSERFRGRIHFEFDKCIACEVCVRVCPINLPVVDWEFNKAVKKKELKHYSIDFGVCIFCGNCVEYCPTNCLSMTEEYELATYDRHELNYDNVALGRLPYKVTEDPMVTPLRELGYLPKGVLDPHDLPSGNQRSGKRPEEIIAESD.

2 consecutive 4Fe-4S ferredoxin-type domains span residues 55–84 (GRIH…VDWE) and 95–124 (KHYS…MTEE). Cys-64, Cys-67, Cys-70, Cys-74, Cys-104, Cys-107, Cys-110, and Cys-114 together coordinate [4Fe-4S] cluster. The interval 169–193 (LDPHDLPSGNQRSGKRPEEIIAESD) is disordered.

The protein belongs to the complex I 23 kDa subunit family. In terms of assembly, NDH-1 is composed of at least 11 different subunits. It depends on [4Fe-4S] cluster as a cofactor.

The protein localises to the cellular thylakoid membrane. It catalyses the reaction a plastoquinone + NADH + (n+1) H(+)(in) = a plastoquinol + NAD(+) + n H(+)(out). It carries out the reaction a plastoquinone + NADPH + (n+1) H(+)(in) = a plastoquinol + NADP(+) + n H(+)(out). NDH-1 shuttles electrons from an unknown electron donor, via FMN and iron-sulfur (Fe-S) centers, to quinones in the respiratory and/or the photosynthetic chain. The immediate electron acceptor for the enzyme in this species is believed to be plastoquinone. Couples the redox reaction to proton translocation, and thus conserves the redox energy in a proton gradient. The chain is NAD(P)H-quinone oxidoreductase subunit I from Rippkaea orientalis (strain PCC 8801 / RF-1) (Cyanothece sp. (strain PCC 8801)).